Reading from the N-terminus, the 346-residue chain is Inositol 2-dehydrogenase (346 aa).

It belongs to the Gfo/Idh/MocA family. Homotetramer.

It catalyses the reaction myo-inositol + NAD(+) = scyllo-inosose + NADH + H(+). Involved in the oxidation of myo-inositol (MI) to 2-keto-myo-inositol (2KMI or 2-inosose). This Rhodococcus erythropolis (strain PR4 / NBRC 100887) protein is Inositol 2-dehydrogenase.